Reading from the N-terminus, the 194-residue chain is 4'-phosphooxetanocin A phosphatase (194 aa).

The 4'-phosphooxetanocin A site is built by R16 and W17. W17 is a binding site for oxetanocin A. H31, H66, and D67 together coordinate Mg(2+). H75, S78, and K81 together coordinate 4'-phosphooxetanocin A. Residues H75 and S78 each coordinate oxetanocin A. A Mg(2+)-binding site is contributed by D132.

Belongs to the 5DNU family. As to quaternary structure, homodimer. Mg(2+) serves as cofactor. Requires Co(2+) as cofactor. Mn(2+) is required as a cofactor.

The enzyme catalyses 4'-phosphooxetanocin A + H2O = oxetanocin A + phosphate. In terms of biological role, phosphohydrolase involved in the biosynthesis of oxetanocin A (OXT-A), a nucleoside analog with antitumor, antiviral and antibacterial properties. Catalyzes the hydrolysis of phosphooxetanocin A (OXT-A-P) to generate oxetanocin A (OXT-A) and a molecule of inorganic phosphate. Can also bind and hydrolyze OXT triphosphate (OXT-A-PPP) and OXT diphosphate (OXT-A-PP), and thus catalyze the sequential hydrolysis of tri-, di- and mono-phosphorylated oxetanocin A compounds, releasing one molecule of inorganic phosphate at a time. In vitro can also use dATP, dAMP and dADP. This is 4'-phosphooxetanocin A phosphatase from Priestia megaterium (Bacillus megaterium).